We begin with the raw amino-acid sequence, 77 residues long: Small ribosomal subunit protein uS17 (77 aa).

The protein belongs to the universal ribosomal protein uS17 family. As to quaternary structure, part of the 30S ribosomal subunit.

Functionally, one of the primary rRNA binding proteins, it binds specifically to the 5'-end of 16S ribosomal RNA. The protein is Small ribosomal subunit protein uS17 of Wolbachia sp. subsp. Brugia malayi (strain TRS).